A 509-amino-acid polypeptide reads, in one-letter code: Histidine--tRNA ligase, cytoplasmic (509 aa).

Alanine 2 carries the post-translational modification N-acetylalanine. The WHEP-TRS domain maps to 3–59 (DRAALEDLVRVQGERVRGLKQQKASAEQIEEEVAKLLKLKAQLGPDEGKPKFVLKTP). A Phosphoserine modification is found at serine 66. Residues 130–132 (DLT), arginine 157, glutamine 173, aspartate 177, arginine 326, and 330–331 (YY) each bind L-histidine. Serine 356 carries the phosphoserine modification.

Belongs to the class-II aminoacyl-tRNA synthetase family. In terms of assembly, homodimer.

It localises to the cytoplasm. It catalyses the reaction tRNA(His) + L-histidine + ATP = L-histidyl-tRNA(His) + AMP + diphosphate + H(+). Functionally, catalyzes the ATP-dependent ligation of histidine to the 3'-end of its cognate tRNA, via the formation of an aminoacyl-adenylate intermediate (His-AMP). Plays a role in axon guidance. The polypeptide is Histidine--tRNA ligase, cytoplasmic (HARS1) (Bos taurus (Bovine)).